The sequence spans 387 residues: Alkanesulfonate monooxygenase (387 aa).

Belongs to the SsuD family.

It catalyses the reaction an alkanesulfonate + FMNH2 + O2 = an aldehyde + FMN + sulfite + H2O + 2 H(+). Catalyzes the desulfonation of aliphatic sulfonates. This Cupriavidus necator (strain ATCC 17699 / DSM 428 / KCTC 22496 / NCIMB 10442 / H16 / Stanier 337) (Ralstonia eutropha) protein is Alkanesulfonate monooxygenase.